Here is an 883-residue protein sequence, read N- to C-terminus: Puromycin-sensitive aminopeptidase (883 aa).

Residues glutamate 125 and 265–269 (GAMEN) contribute to the substrate site. Zn(2+) is bound at residue histidine 301. Glutamate 302 functions as the Proton acceptor in the catalytic mechanism. Histidine 305 and glutamate 324 together coordinate Zn(2+).

This sequence belongs to the peptidase M1 family. Zn(2+) is required as a cofactor.

The catalysed reaction is Release of an N-terminal amino acid, preferentially alanine, from a wide range of peptides, amides and arylamides.. Its activity is regulated as follows. Strongly inhibited by puromycin and DAMPAQ-22. Aminopeptidase with broad substrate specificity for several peptides. Involved in proteolytic events essential for cell growth and viability. Plays an essential role during prophase I of meiosis. Required for correct meiotic reconbination in both male and female gametophytes. This Arabidopsis thaliana (Mouse-ear cress) protein is Puromycin-sensitive aminopeptidase (MPA1).